Reading from the N-terminus, the 1824-residue chain is Afadin (1824 aa).

The 95-residue stretch at 39–133 folds into the Ras-associating 1 domain; the sequence is FHGVMRFYFQ…GRFVLKNEND (95 aa). The segment at 128 to 194 is disordered; that stretch reads LKNENDAIPP…DRPFQGEDVE (67 aa). Residues 146–185 are a coiled coil; the sequence is EKQEKEGVIQNFKRTLSKKEKKEKKKREKEALRQASDKDD. Positions 160–172 are enriched in basic residues; the sequence is TLSKKEKKEKKKR. Positions 173 to 189 are enriched in basic and acidic residues; that stretch reads EKEALRQASDKDDRPFQ. A phosphoserine mark is found at Ser-216, Ser-246, and Ser-256. The region spanning 246–348 is the Ras-associating 2 domain; the sequence is SGGTLRIYAD…LVFQLKRRPP (103 aa). Over residues 349-371 the composition is skewed to basic and acidic residues; that stretch reads DHIPKKTKKHLEGKTPKGKERAD. A disordered region spans residues 349-378; it reads DHIPKKTKKHLEGKTPKGKERADGSGYGST. Residues Ser-391 and Ser-424 each carry the phosphoserine modification. The region spanning 426–492 is the FHA domain; the sequence is TEVGTEKLDD…LQSGMKVQFG (67 aa). 5 positions are modified to phosphoserine: Ser-512, Ser-557, Ser-562, Ser-589, and Ser-655. The tract at residues 534 to 595 is disordered; the sequence is FDLGGDIHSG…RQESRTQDAS (62 aa). Over residues 580-591 the composition is skewed to basic and acidic residues; the sequence is QQPDYRRQESRT. Residues 668–908 enclose the Dilute domain; sequence NKMVSMMEGV…IENVVTVAEN (241 aa). The region spanning 1007–1093 is the PDZ domain; sequence IITVTLKKQN…VVTLEVAKQG (87 aa). Phosphoserine occurs at positions 1083, 1107, 1126, 1140, 1143, 1172, 1173, 1182, and 1199. The segment at 1107–1223 is disordered; that stretch reads SPMMQRISDR…PRPEAYPIPT (117 aa). Residues 1113–1128 are compositionally biased toward basic and acidic residues; it reads ISDRRGSGKPRPKSEG. Positions 1132–1143 are enriched in polar residues; it reads YNNSTQNGSPES. Positions 1152–1172 are enriched in basic and acidic residues; the sequence is SEPKKLPGDDRLMKNRADHRS. Over residues 1190-1210 the composition is skewed to polar residues; the sequence is ASGTTAKITSVSTGNLCTEEQ. A phosphothreonine mark is found at Thr-1211 and Thr-1232. Disordered stretches follow at residues 1235–1473, 1501–1528, and 1569–1824; these read ASKS…LQRP, SKEE…EKQQ, and RLQE…LNTK. Ser-1238 is modified (phosphoserine). 2 stretches are compositionally biased toward basic and acidic residues: residues 1252–1262 and 1274–1302; these read YEEKPHMHTDS and RSQE…KSDS. Position 1275 is a phosphoserine (Ser-1275). The span at 1309-1318 shows a compositional bias: low complexity; the sequence is SSSLDSSTSS. Residues 1325–1337 are compositionally biased toward polar residues; sequence SSKSVTPASTLTK. Ser-1328 carries the phosphoserine modification. Position 1330 is a phosphothreonine (Thr-1330). Positions 1345–1356 are enriched in low complexity; that stretch reads TPAAIPATPVAV. The segment covering 1364 to 1373 has biased composition (pro residues); the sequence is LPPPPPPPPV. Residues 1407–1441 are compositionally biased toward basic and acidic residues; it reads AERRKREEHQRWYEKEKARLEEERERKRREQERKL. Residues 1408–1448 adopt a coiled-coil conformation; the sequence is ERRKREEHQRWYEKEKARLEEERERKRREQERKLGQMRTQS. Residues Ser-1501 and Ser-1512 each carry the phosphoserine modification. Residues 1515 to 1528 show a composition bias toward basic and acidic residues; that stretch reads PWKRDAKEKLEKQQ. Positions 1523 to 1667 form a coiled coil; sequence KLEKQQQMHI…SRLEAERRRQ (145 aa). Residues 1578-1589 show a composition bias toward acidic residues; the sequence is EDDEEEEDDDVD. Positions 1597–1677 are enriched in basic and acidic residues; sequence LEAERRARLQ…HDEAARRLLE (81 aa). Residues 1694–1709 show a composition bias toward pro residues; that stretch reads PPSPSPAPGAPPPPPQ. Ser-1696, Ser-1721, Ser-1774, Ser-1779, and Ser-1799 each carry phosphoserine. A compositionally biased stretch (basic and acidic residues) spans 1762-1776; the sequence is DACRDAKEKRSKSQD. N6-acetyllysine is present on Lys-1807. A compositionally biased stretch (basic and acidic residues) spans 1813 to 1824; that stretch reads KLTELENELNTK.

In terms of assembly, homodimer. Interacts with F-actin, nectin and NECTIN3. Essential for the association of nectin and E-cadherin. Isoform 1/s-afadin does not interact with F-actin. Interacts with ZO-1 and occludin, but probably in an indirect manner. Interacts with RIT1 and RIT2. Interacts with NRXN1 and BCR. Interacts with ADAM10; the interaction locks ADAM10 at adherens junctions following ADAM10 recruitment to adherens junctions by TSPAN33.

Its subcellular location is the cell junction. It is found in the adherens junction. Functionally, belongs to an adhesion system, probably together with the E-cadherin-catenin system, which plays a role in the organization of homotypic, interneuronal and heterotypic cell-cell adherens junctions (AJs). Nectin- and actin-filament-binding protein that connects nectin to the actin cytoskeleton. May play a key role in the organization of epithelial structures of the embryonic ectoderm. Essential for the organization of adherens junctions. The polypeptide is Afadin (Homo sapiens (Human)).